The following is a 250-amino-acid chain: tRNA (guanine-N(1)-)-methyltransferase (250 aa).

S-adenosyl-L-methionine is bound by residues G116 and 136-141; that span reads IGDYVL.

Belongs to the RNA methyltransferase TrmD family. Homodimer.

Its subcellular location is the cytoplasm. It carries out the reaction guanosine(37) in tRNA + S-adenosyl-L-methionine = N(1)-methylguanosine(37) in tRNA + S-adenosyl-L-homocysteine + H(+). Its function is as follows. Specifically methylates guanosine-37 in various tRNAs. This is tRNA (guanine-N(1)-)-methyltransferase from Pseudomonas savastanoi pv. phaseolicola (strain 1448A / Race 6) (Pseudomonas syringae pv. phaseolicola (strain 1448A / Race 6)).